The following is a 597-amino-acid chain: Elongation factor 4 (597 aa).

The tr-type G domain maps to 2-184; that stretch reads KNIRNFSIIA…EVVNKIPPPK (183 aa). GTP contacts are provided by residues 14–19 and 131–134; these read DHGKST and NKID.

This sequence belongs to the TRAFAC class translation factor GTPase superfamily. Classic translation factor GTPase family. LepA subfamily.

The protein localises to the cell inner membrane. It carries out the reaction GTP + H2O = GDP + phosphate + H(+). Functionally, required for accurate and efficient protein synthesis under certain stress conditions. May act as a fidelity factor of the translation reaction, by catalyzing a one-codon backward translocation of tRNAs on improperly translocated ribosomes. Back-translocation proceeds from a post-translocation (POST) complex to a pre-translocation (PRE) complex, thus giving elongation factor G a second chance to translocate the tRNAs correctly. Binds to ribosomes in a GTP-dependent manner. The protein is Elongation factor 4 of Chromobacterium violaceum (strain ATCC 12472 / DSM 30191 / JCM 1249 / CCUG 213 / NBRC 12614 / NCIMB 9131 / NCTC 9757 / MK).